Consider the following 482-residue polypeptide: tRNA sulfurtransferase (482 aa).

The 105-residue stretch at 61–165 folds into the THUMP domain; it reads AEVLEILTHT…GDKLNQVLAR (105 aa). ATP-binding positions include 183-184, K265, G287, and Q296; that span reads LI. C344 and C456 form a disulfide bridge. Positions 404 to 482 constitute a Rhodanese domain; it reads VEEHAVVLDI…GFNNVKVYRP (79 aa). The active-site Cysteine persulfide intermediate is the C456.

This sequence belongs to the ThiI family.

The protein localises to the cytoplasm. It catalyses the reaction [ThiI sulfur-carrier protein]-S-sulfanyl-L-cysteine + a uridine in tRNA + 2 reduced [2Fe-2S]-[ferredoxin] + ATP + H(+) = [ThiI sulfur-carrier protein]-L-cysteine + a 4-thiouridine in tRNA + 2 oxidized [2Fe-2S]-[ferredoxin] + AMP + diphosphate. The catalysed reaction is [ThiS sulfur-carrier protein]-C-terminal Gly-Gly-AMP + S-sulfanyl-L-cysteinyl-[cysteine desulfurase] + AH2 = [ThiS sulfur-carrier protein]-C-terminal-Gly-aminoethanethioate + L-cysteinyl-[cysteine desulfurase] + A + AMP + 2 H(+). The protein operates within cofactor biosynthesis; thiamine diphosphate biosynthesis. Its function is as follows. Catalyzes the ATP-dependent transfer of a sulfur to tRNA to produce 4-thiouridine in position 8 of tRNAs, which functions as a near-UV photosensor. Also catalyzes the transfer of sulfur to the sulfur carrier protein ThiS, forming ThiS-thiocarboxylate. This is a step in the synthesis of thiazole, in the thiamine biosynthesis pathway. The sulfur is donated as persulfide by IscS. The protein is tRNA sulfurtransferase of Vibrio parahaemolyticus serotype O3:K6 (strain RIMD 2210633).